A 253-amino-acid chain; its full sequence is uncharacterized protein (253 aa).

This sequence belongs to the herpesviridae BTRF1 family.

This is an uncharacterized protein from Saimiriine herpesvirus 2 (strain 11) (SaHV-2).